Reading from the N-terminus, the 246-residue chain is MWIGVISLFPEMFRAITDYGVTGRAVKNGLLSVQCWSPRDFTYDRHRTVDDRPYGGGPGMLMMVQPLREAIHAAKAAAGEGAKVIYLSPQGRKLDQQGVCELATNQKMILVCGRYEGVDERVIKTEIDEEWSIGDYVLSGGELPAMTLIDSVSRFIPGVLGHQASAEEDSFVDGLLDCPHYTRPEVLEGMEVPPVLLSGNHAEIRRWRLKQSLGRTWLRRPELLESLALTDEQMVLLAEFQREHKP.

Residues Gly113 and 133 to 138 contribute to the S-adenosyl-L-methionine site; that span reads IGDYVL.

It belongs to the RNA methyltransferase TrmD family. In terms of assembly, homodimer.

Its subcellular location is the cytoplasm. It catalyses the reaction guanosine(37) in tRNA + S-adenosyl-L-methionine = N(1)-methylguanosine(37) in tRNA + S-adenosyl-L-homocysteine + H(+). Specifically methylates guanosine-37 in various tRNAs. The protein is tRNA (guanine-N(1)-)-methyltransferase of Yersinia enterocolitica serotype O:8 / biotype 1B (strain NCTC 13174 / 8081).